The following is a 485-amino-acid chain: MEYKLVIGLEIHIQLGLKTKAFCGCKNEFGGVPNSRICPICLGLPGSLPSVNVELINSAILAGHATNSKIRRVVKFDRKHYYYPDLPKGYQISQNDKPICEGGSLLIETPSGFKKINIIRIHMEEDSGKSLHLLDSENQSYIDFNRSGAPLLEIVSAPDIGNGDEAVAFLSSLREIFRYLDLSECNMENGSFRCDVNVNLIVNESGIEYKTPIAEIKNLNSFKSIKAAIEYEELRQQEEWIQFRKTLDSCGKHTRGFDDKSGITVIQRNKETVSDYRYFQEPDLPLIEIDDFYIDNIKNLKLIELPFDARVRLKAQYGLSDFDVTTLTSDKHLLRYFEDAVINSSDPKKVANWILSEVLSVLNDKGISVLEFNLLPSHITELVEFIVADKISGKMAKKVFSEMMARKVPASVIISENQLEQISDEFVIKQIVLEVLNENPKSIELYKKGKDHAIKFMMGQIMKKSSGKINPILANEILLQSLANV.

Belongs to the GatB/GatE family. GatB subfamily. In terms of assembly, heterotrimer of A, B and C subunits.

It carries out the reaction L-glutamyl-tRNA(Gln) + L-glutamine + ATP + H2O = L-glutaminyl-tRNA(Gln) + L-glutamate + ADP + phosphate + H(+). It catalyses the reaction L-aspartyl-tRNA(Asn) + L-glutamine + ATP + H2O = L-asparaginyl-tRNA(Asn) + L-glutamate + ADP + phosphate + 2 H(+). In terms of biological role, allows the formation of correctly charged Asn-tRNA(Asn) or Gln-tRNA(Gln) through the transamidation of misacylated Asp-tRNA(Asn) or Glu-tRNA(Gln) in organisms which lack either or both of asparaginyl-tRNA or glutaminyl-tRNA synthetases. The reaction takes place in the presence of glutamine and ATP through an activated phospho-Asp-tRNA(Asn) or phospho-Glu-tRNA(Gln). The chain is Aspartyl/glutamyl-tRNA(Asn/Gln) amidotransferase subunit B from Borreliella afzelii (strain PKo) (Borrelia afzelii).